The primary structure comprises 194 residues: Imidazoleglycerol-phosphate dehydratase (194 aa).

It belongs to the imidazoleglycerol-phosphate dehydratase family.

It is found in the cytoplasm. It carries out the reaction D-erythro-1-(imidazol-4-yl)glycerol 3-phosphate = 3-(imidazol-4-yl)-2-oxopropyl phosphate + H2O. It participates in amino-acid biosynthesis; L-histidine biosynthesis; L-histidine from 5-phospho-alpha-D-ribose 1-diphosphate: step 6/9. The protein is Imidazoleglycerol-phosphate dehydratase of Listeria monocytogenes serotype 4a (strain HCC23).